Consider the following 842-residue polypeptide: MDIRKAYLDFFASKGHEITPSSPLVPDDATLLFANAGMVPFKSIFTGEIPRPNPPRKTSCQTCIRAGGKHNDLDNVGYTARHHTFFEMLGNFSFGDYFKEQAIAYAWEFVTEVLKLPKDRLYVTVHENDDEAFNLWQKHIQKERIYKFGDKDNFWQMGDTGPCGPCSEIFYDQGEEHFNSSEDYMGGDGDRFLEIWNLVFMQYERSADGVLSPLPKPSIDTGMGLERVTAIKEGKFSNFDSSLFMPIINEISKLCNKTYIYESGASFRVIADHIRSSVFLLAQGVSFDKEGRGYVLRRILRRALRHGYLLGFKQAFMYKLVDIVCDLMGGHYTYLNEKKDFIKEQIRLEEERFLSTIENGIEIFNEELKNTKEIFSGEVAFKLYDTYGFPLDLTADMLREKNLKVDEEKFELLMNEQKARAKASWKGSGDKTASGDFKNLLEKFGENHFVGYEKAECESKILALLDEDFKEVSTLKDAGWVMLENTPFYATSGGQSADSGFIAKREVLDTQKFFNLNLSFVKAGEELKVGDIVHARIDTEKREQIARHHSATHLLHHALREILGSHVSQAGSLVESNKLRFDFTHHKALNKEELESIEKRVNEMIINSSEAILENMPLEEAKKSGAIALFNEKYQGNVRVLTLGESKELCGGTHVKNTAQIGSFYIVKESGVSAGVRRIEAVVSKAALEFVKNQLEELSKVKDELKNNDILNGVKKLKNEILSLKNELKNSSKTELDSKNIQGVEICVKRIDNGDIKAMIDDFKNKFAKAVILLIQVKDEKITLAAGVKDAPLKAGALVKEAAQILGGNGGGRDDFATAGGKDLSKINEALKQSLETIEKAL.

Zn(2+) is bound by residues His-549, His-553, Cys-650, and His-654.

This sequence belongs to the class-II aminoacyl-tRNA synthetase family. Zn(2+) is required as a cofactor.

The protein resides in the cytoplasm. It carries out the reaction tRNA(Ala) + L-alanine + ATP = L-alanyl-tRNA(Ala) + AMP + diphosphate. In terms of biological role, catalyzes the attachment of alanine to tRNA(Ala) in a two-step reaction: alanine is first activated by ATP to form Ala-AMP and then transferred to the acceptor end of tRNA(Ala). Also edits incorrectly charged Ser-tRNA(Ala) and Gly-tRNA(Ala) via its editing domain. This is Alanine--tRNA ligase from Campylobacter jejuni subsp. jejuni serotype O:23/36 (strain 81-176).